Consider the following 485-residue polypeptide: Endo-1,4-beta-xylanase C (485 aa).

An N-terminal signal peptide occupies residues 1–19 (MKFLQIIPVLLSLTSTTLA). The GH11 domain maps to 34–234 (KETGNKVGTI…GNGGVSGTAD (201 aa)). N-linked (GlcNAc...) asparagine glycans are attached at residues N56 and N107. The Nucleophile role is filled by E128. N175 carries N-linked (GlcNAc...) asparagine glycosylation. The Proton donor role is filled by E221. The disordered stretch occupies residues 250–450 (ASPAPAGGAP…PQNASDGGNC (201 aa)). 2 stretches are compositionally biased toward low complexity: residues 265–330 (AGND…QGQH) and 344–354 (GSDFNNWSQGG). 7 tandem repeats follow at residues 275–280 (GQQPPQ), 281–286 (GQQPPQ), 287–292 (GQQPPQ), 293–298 (GQQPPQ), 299–304 (GQQPPQ), 310–315 (GQQPPQ), and 316–321 (GQQPPQ). The 7 X 6 AA tandem repeats of G-Q-Q-P-P-Q stretch occupies residues 275–321 (GQQPPQGQQPPQGQQPPQGQQPPQGQQPPQGNDQQGQQPPQGQQPPQ). A glycan (N-linked (GlcNAc...) asparagine) is linked at N349. 8 repeat units span residues 353–361 (GGSPWGGNQ), 362–370 (GGSPWGGNQ), 371–379 (GGNPWGGNQ), 380–388 (GGSPWGGNQ), 389–397 (GGSPWGQGN), 399–407 (GGNPWGGNQ), 408–416 (GGSPWGGNQ), and 417–425 (GGNPWGGNQ). The interval 353–425 (GGSPWGGNQG…QGGNPWGGNQ (73 aa)) is 8 X 9 AA tandem repeats of G-G-[SN]-P-W-G-G-N-Q. The segment covering 355 to 425 (SPWGGNQGGS…QGGNPWGGNQ (71 aa)) has biased composition (gly residues). Residues 426–445 (WGAPQNAAAPQSAAAPQNAS) show a composition bias toward low complexity. The N-linked (GlcNAc...) asparagine glycan is linked to N443. A CBM1 domain is found at 449–484 (NCASLWGQCGGQGYNGPSCCSEGSCKPINEYFHQCQ).

This sequence belongs to the glycosyl hydrolase 11 (cellulase G) family.

The protein localises to the secreted. It carries out the reaction Endohydrolysis of (1-&gt;4)-beta-D-xylosidic linkages in xylans.. The protein operates within glycan degradation; xylan degradation. Its function is as follows. Endo-1,4-beta-xylanase involved in the hydrolysis of xylan, a major structural heterogeneous polysaccharide found in plant biomass representing the second most abundant polysaccharide in the biosphere, after cellulose. This chain is Endo-1,4-beta-xylanase C (xynC), found in Neocallimastix patriciarum (Rumen fungus).